Reading from the N-terminus, the 72-residue chain is Translation initiation factor IF-1 (72 aa).

One can recognise an S1-like domain in the interval 1-72 (MAKEEMLEFP…TKGRINYRFK (72 aa)).

The protein belongs to the IF-1 family. In terms of assembly, component of the 30S ribosomal translation pre-initiation complex which assembles on the 30S ribosome in the order IF-2 and IF-3, IF-1 and N-formylmethionyl-tRNA(fMet); mRNA recruitment can occur at any time during PIC assembly.

It localises to the cytoplasm. Functionally, one of the essential components for the initiation of protein synthesis. Stabilizes the binding of IF-2 and IF-3 on the 30S subunit to which N-formylmethionyl-tRNA(fMet) subsequently binds. Helps modulate mRNA selection, yielding the 30S pre-initiation complex (PIC). Upon addition of the 50S ribosomal subunit IF-1, IF-2 and IF-3 are released leaving the mature 70S translation initiation complex. The chain is Translation initiation factor IF-1 from Jannaschia sp. (strain CCS1).